The chain runs to 288 residues: Eukaryotic translation initiation factor 3 subunit G (288 aa).

Positions 1–33 (MSRVANNRDWADDEDLEDSNELPQSTTTTNKDG) are disordered. The segment covering 11–20 (ADDEDLEDSN) has biased composition (acidic residues). Polar residues predominate over residues 21 to 33 (ELPQSTTTTNKDG). Residues 208–286 (ATLRVTNVSE…LILRVEFAKK (79 aa)) form the RRM domain.

The protein belongs to the eIF-3 subunit G family. As to quaternary structure, component of the eukaryotic translation initiation factor 3 (eIF-3) complex.

It localises to the cytoplasm. In terms of biological role, RNA-binding component of the eukaryotic translation initiation factor 3 (eIF-3) complex, which is involved in protein synthesis of a specialized repertoire of mRNAs and, together with other initiation factors, stimulates binding of mRNA and methionyl-tRNAi to the 40S ribosome. The eIF-3 complex specifically targets and initiates translation of a subset of mRNAs involved in cell proliferation. This subunit can bind 18S rRNA. This is Eukaryotic translation initiation factor 3 subunit G (tif35) from Sclerotinia sclerotiorum (strain ATCC 18683 / 1980 / Ss-1) (White mold).